A 489-amino-acid chain; its full sequence is 3-octaprenyl-4-hydroxybenzoate carboxy-lyase (489 aa).

Asn-172 serves as a coordination point for Mn(2+). Residues 175–177 (IYR), 189–191 (RWL), and 194–195 (RG) contribute to the prenylated FMN site. Glu-238 contacts Mn(2+). The Proton donor role is filled by Asp-287.

It belongs to the UbiD family. In terms of assembly, homohexamer. Prenylated FMN is required as a cofactor. It depends on Mn(2+) as a cofactor.

The protein resides in the cell membrane. It carries out the reaction a 4-hydroxy-3-(all-trans-polyprenyl)benzoate + H(+) = a 2-(all-trans-polyprenyl)phenol + CO2. It functions in the pathway cofactor biosynthesis; ubiquinone biosynthesis. In terms of biological role, catalyzes the decarboxylation of 3-octaprenyl-4-hydroxy benzoate to 2-octaprenylphenol, an intermediate step in ubiquinone biosynthesis. The protein is 3-octaprenyl-4-hydroxybenzoate carboxy-lyase of Aeromonas salmonicida (strain A449).